A 349-amino-acid polypeptide reads, in one-letter code: S-adenosylmethionine:tRNA ribosyltransferase-isomerase (349 aa).

Belongs to the QueA family. Monomer.

It localises to the cytoplasm. It catalyses the reaction 7-aminomethyl-7-carbaguanosine(34) in tRNA + S-adenosyl-L-methionine = epoxyqueuosine(34) in tRNA + adenine + L-methionine + 2 H(+). Its pathway is tRNA modification; tRNA-queuosine biosynthesis. Transfers and isomerizes the ribose moiety from AdoMet to the 7-aminomethyl group of 7-deazaguanine (preQ1-tRNA) to give epoxyqueuosine (oQ-tRNA). In Azotobacter vinelandii (strain DJ / ATCC BAA-1303), this protein is S-adenosylmethionine:tRNA ribosyltransferase-isomerase.